The chain runs to 65 residues: Alpha-conotoxin BnIA (65 aa).

Positions 1–21 (MGMRMMFTMFLLVVLATTVVS) are cleaved as a signal peptide. The propeptide occupies 22 to 48 (FASDRASDGRNAAAKDKASDLVALTVK). Intrachain disulfides connect Cys-50–Cys-56 and Cys-51–Cys-64. The ser-Xaa-Pro motif, crucial for potent interaction with nAChR stretch occupies residues 52–54 (SHP). Cysteine amide is present on Cys-64.

The protein belongs to the conotoxin A superfamily. As to expression, expressed by the venom duct.

The protein resides in the secreted. Functionally, alpha-conotoxins act on postsynaptic membranes, they bind to the nicotinic acetylcholine receptors (nAChR) and thus inhibit them. This toxin inhibits acetylcholine-evoked currents reversibly in oocytes expressing the human alpha-7/CHRNA7 nAChR, and blocks nerve-evoked skeletal muscle contractions in isolated mouse neuromuscular preparations, but with a very low affinity. This Conus bandanus (Banded marble cone) protein is Alpha-conotoxin BnIA.